A 507-amino-acid chain; its full sequence is Subtilisin-like protease 1 (507 aa).

The N-terminal stretch at 1–19 (MGVFRFISISLAAVSAANA) is a signal peptide. Residues 20–116 (AQILSMPHAQ…VEPDTIISVN (97 aa)) constitute a propeptide that is removed on maturation. Residues 34–113 (SYIVMMKDDT…VMFVEPDTII (80 aa)) form the Inhibitor I9 domain. The 275-residue stretch at 126–400 (SWGLARISNS…NVLISNGGAK (275 aa)) folds into the Peptidase S8 domain. Residues Asp-158 and His-190 each act as charge relay system in the active site. The interval 175–198 (GSNQVNDGDDRDGSGHGTHTSGTM) is disordered. An N-linked (GlcNAc...) asparagine glycan is attached at Asn-251. Positions 282–294 (NENQDARSSSPAS) are enriched in polar residues. The disordered stretch occupies residues 282-312 (NENQDARSSSPASEPSVCTVGSSAEDDSRSS). Residue Ser-345 is the Charge relay system of the active site. Polar residues predominate over residues 378-394 (SSSITDVGPGTPTNVLI). The interval 378 to 486 (SSSITDVGPG…YPGGDNFDFD (109 aa)) is disordered. Composition is skewed to pro residues over residues 405–428 (KPAP…PSQP) and 438–449 (EPFPGEPFPGEP). Positions 450-461 (FPGESSPGESAP) are enriched in low complexity. Residues 462-476 (APAPMPPSPQHPHTP) are compositionally biased toward pro residues.

It belongs to the peptidase S8 family.

It localises to the secreted. Its function is as follows. Secreted subtilisin-like serine protease with keratinolytic activity that contributes to pathogenicity. In Trichophyton tonsurans (Scalp ringworm fungus), this protein is Subtilisin-like protease 1 (SUB1).